The following is a 272-amino-acid chain: Cytochrome b-c1 complex subunit Rieske-2, mitochondrial (272 aa).

The transit peptide at 1 to 60 directs the protein to the mitochondrion; sequence MLRIAGRRASSLSRWPVRSVAPSSSAFISANHFSSDDDSSSPRSISPSLASVFLHHTRGF. At 61-109 the chain is on the mitochondrial matrix side; it reads SSNSVSHAHDMGLVPDLPPTVAAIKNPTSKIVYDEHNHERYPPGDPSKR. A helical transmembrane segment spans residues 110–132; sequence AFAYFVLTGGRFVYASLVRLLIL. Topologically, residues 133-272 are mitochondrial intermembrane; sequence KFVLSMSASK…FLEENKLLIG (140 aa). A Rieske domain is found at 182-270; sequence INLANSVDLG…YSFLEENKLL (89 aa). [2Fe-2S] cluster contacts are provided by Cys215, His217, Cys234, and His237. An intrachain disulfide couples Cys220 to Cys236.

The protein belongs to the Rieske iron-sulfur protein family. Component of the ubiquinol-cytochrome c oxidoreductase (cytochrome b-c1 complex, complex III, CIII), a multisubunit enzyme composed of 3 respiratory subunits cytochrome b, cytochrome c1 and Rieske protein, 2 core protein subunits, and several low-molecular weight protein subunits. The complex exists as an obligatory dimer and forms supercomplexes (SCs) in the inner mitochondrial membrane with cytochrome c oxidase (complex IV, CIV). [2Fe-2S] cluster is required as a cofactor. In terms of tissue distribution, high levels are seen in the flowers while a low level expression is seen in the roots, leaves and stems.

It is found in the mitochondrion inner membrane. It catalyses the reaction a quinol + 2 Fe(III)-[cytochrome c](out) = a quinone + 2 Fe(II)-[cytochrome c](out) + 2 H(+)(out). Its function is as follows. Component of the ubiquinol-cytochrome c oxidoreductase, a multisubunit transmembrane complex that is part of the mitochondrial electron transport chain which drives oxidative phosphorylation. The respiratory chain contains 3 multisubunit complexes succinate dehydrogenase (complex II, CII), ubiquinol-cytochrome c oxidoreductase (cytochrome b-c1 complex, complex III, CIII) and cytochrome c oxidase (complex IV, CIV), that cooperate to transfer electrons derived from NADH and succinate to molecular oxygen, creating an electrochemical gradient over the inner membrane that drives transmembrane transport and the ATP synthase. The cytochrome b-c1 complex catalyzes electron transfer from ubiquinol to cytochrome c, linking this redox reaction to translocation of protons across the mitochondrial inner membrane, with protons being carried across the membrane as hydrogens on the quinol. In the process called Q cycle, 2 protons are consumed from the matrix, 4 protons are released into the intermembrane space and 2 electrons are passed to cytochrome c. The Rieske protein is a catalytic core subunit containing a [2Fe-2S] iron-sulfur cluster. It cycles between 2 conformational states during catalysis to transfer electrons from the quinol bound in the Q(0) site in cytochrome b to cytochrome c1. This Nicotiana tabacum (Common tobacco) protein is Cytochrome b-c1 complex subunit Rieske-2, mitochondrial.